Here is a 261-residue protein sequence, read N- to C-terminus: Caveolae-associated protein 3 (261 aa).

Positions 1 to 84 (MRESALERGP…SNTLAQLLAK (84 aa)) are interaction with CAVIN1. Residues 20 to 78 (VHAVTVVTLLEKLASMLETLRERQGGLARRQGGLAGSVRRIQSGLGALSRSHDTTSNTL) form a leucine-zipper region. Phosphoserine occurs at positions 62 and 70. Lysine 128 is covalently cross-linked (Glycyl lysine isopeptide (Lys-Gly) (interchain with G-Cter in SUMO2)). Residues 135 to 203 (ASAFQKAPEP…SGRKGPAAPP (69 aa)) are interaction with CAV1. The disordered stretch occupies residues 139–261 (QKAPEPLGPA…EALLQMESVA (123 aa)). Acidic residues predominate over residues 158–170 (LEAEVGESSDEEP). Phosphoserine occurs at positions 165, 166, and 173. The segment covering 200–212 (AAPPPTPVKPPRL) has biased composition (pro residues). The segment covering 213–231 (GPGRSAEAQPEAQPALEPT) has biased composition (low complexity).

It belongs to the CAVIN family. As to quaternary structure, component of the CAVIN complex composed of CAVIN1, CAVIN2, CAVIN3 and CAVIN4. Interacts with PRKCD and with phosphatidylserine. Phosphatidylserine may form a bridge between PKC and PKC-binding partners and stabilize the binding. Interacts with PER2. Interacts with CAVIN1. Interacts (via leucine-zipper domain) with CAV1 in a cholesterol-sensitive manner. Interacts with EPS15L1. In terms of processing, in vitro, phosphorylated by PRKCD. As to expression, skeletal muscle, liver, stomach, lung, kidney and heart (at protein level). Strongly expressed in mammary and epithelial cells.

It localises to the cytoplasm. It is found in the membrane. The protein localises to the caveola. The protein resides in the cytosol. Functionally, regulates the traffic and/or budding of caveolae. Plays a role in caveola formation in a tissue-specific manner. Required for the formation of caveolae in smooth muscle but not in the lung and heart endothelial cells. Regulates the equilibrium between cell surface-associated and cell surface-dissociated caveolae by promoting the rapid release of caveolae from the cell surface. Plays a role in the regulation of the circadian clock. Modulates the period length and phase of circadian gene expression and also regulates expression and interaction of the core clock components PER1/2 and CRY1/2. The sequence is that of Caveolae-associated protein 3 from Homo sapiens (Human).